A 110-amino-acid polypeptide reads, in one-letter code: Nucleoid-associated protein bbp_426 (110 aa).

It belongs to the YbaB/EbfC family. Homodimer.

It localises to the cytoplasm. Its subcellular location is the nucleoid. Functionally, binds to DNA and alters its conformation. May be involved in regulation of gene expression, nucleoid organization and DNA protection. The chain is Nucleoid-associated protein bbp_426 from Buchnera aphidicola subsp. Baizongia pistaciae (strain Bp).